Here is a 968-residue protein sequence, read N- to C-terminus: RNA polymerase-associated protein RapA (968 aa).

Residues 163–332 form the Helicase ATP-binding domain; sequence EVGRRYAPRV…FARLRLLDPD (170 aa). Residue 176–183 participates in ATP binding; it reads DEVGLGKT. A DEAH box motif is present at residues 278–281; it reads DEAH. One can recognise a Helicase C-terminal domain in the interval 491 to 641; the sequence is RVDWLIAFLK…AFELTCPSGH (151 aa).

The protein belongs to the SNF2/RAD54 helicase family. RapA subfamily. In terms of assembly, interacts with the RNAP. Has a higher affinity for the core RNAP than for the holoenzyme. Its ATPase activity is stimulated by binding to RNAP.

Transcription regulator that activates transcription by stimulating RNA polymerase (RNAP) recycling in case of stress conditions such as supercoiled DNA or high salt concentrations. Probably acts by releasing the RNAP, when it is trapped or immobilized on tightly supercoiled DNA. Does not activate transcription on linear DNA. Probably not involved in DNA repair. This Shewanella denitrificans (strain OS217 / ATCC BAA-1090 / DSM 15013) protein is RNA polymerase-associated protein RapA.